A 456-amino-acid chain; its full sequence is 5-hydroxytryptamine receptor 3E (456 aa).

A signal peptide spans 1–25 (MEGSWFHRKRFSFYLLLGFLLQGRG). Residues 26–248 (VTFTINCSGF…FYVAIRRRPS (223 aa)) are Extracellular-facing. A disulfide bridge links cysteine 162 with cysteine 176. An N-linked (GlcNAc...) asparagine glycan is attached at asparagine 175. A helical transmembrane segment spans residues 249-269 (LYVINLLVPSGFLVAIDALSF). Residues 270-282 (YLPVKSGNRVPFK) are Cytoplasmic-facing. The helical transmembrane segment at 283–303 (ITLLLGYNVFLLMMSDLLPTS) threads the bilayer. Residues 304–307 (GTPL) lie on the Extracellular side of the membrane. A helical membrane pass occupies residues 308–328 (IGVYFALCLSLMVGSLLETIF). At 329–433 (ITHLLHVATT…WLQFSHAMDA (105 aa)) the chain is on the cytoplasmic side. The tract at residues 401-432 (TGGSEWTRAQREHEAQKQHSVELWLQFSHAMD) is HA-stretch; determines single-channel conductance in 5-HT3 receptors. The chain crosses the membrane as a helical span at residues 434–454 (MLFRLYLLFMASSIITVICLW). Over 455-456 (NT) the chain is Extracellular.

The protein belongs to the ligand-gated ion channel (TC 1.A.9) family. 5-hydroxytryptamine receptor (TC 1.A.9.2) subfamily. HTR3E sub-subfamily. In terms of assembly, forms homopentameric as well as heteropentameric serotonin-activated cation-selective channel complexes with HTR3A. The homomeric complex is not functional. Heteropentameric complexes display properties which resemble that of neuronal serotonin-activated channels in vivo. As to expression, expressed in adult colon and intestine.

It localises to the postsynaptic cell membrane. The protein resides in the cell membrane. It carries out the reaction Na(+)(in) = Na(+)(out). It catalyses the reaction K(+)(in) = K(+)(out). The enzyme catalyses Ca(2+)(in) = Ca(2+)(out). Functionally, forms serotonin (5-hydroxytryptamine/5-HT3)-activated cation-selective channel complexes, which when activated cause fast, depolarizing responses in neurons. The polypeptide is 5-hydroxytryptamine receptor 3E (Homo sapiens (Human)).